Here is a 611-residue protein sequence, read N- to C-terminus: Dihydroxy-acid dehydratase (611 aa).

Asp-81 serves as a coordination point for Mg(2+). Cys-122 is a [2Fe-2S] cluster binding site. Mg(2+) is bound by residues Asp-123 and Lys-124. Residue Lys-124 is modified to N6-carboxylysine. Cys-195 contributes to the [2Fe-2S] cluster binding site. Glu-491 provides a ligand contact to Mg(2+). Ser-517 acts as the Proton acceptor in catalysis.

This sequence belongs to the IlvD/Edd family. As to quaternary structure, homodimer. Requires [2Fe-2S] cluster as cofactor. Mg(2+) serves as cofactor.

The catalysed reaction is (2R)-2,3-dihydroxy-3-methylbutanoate = 3-methyl-2-oxobutanoate + H2O. It carries out the reaction (2R,3R)-2,3-dihydroxy-3-methylpentanoate = (S)-3-methyl-2-oxopentanoate + H2O. Its pathway is amino-acid biosynthesis; L-isoleucine biosynthesis; L-isoleucine from 2-oxobutanoate: step 3/4. It functions in the pathway amino-acid biosynthesis; L-valine biosynthesis; L-valine from pyruvate: step 3/4. Functionally, functions in the biosynthesis of branched-chain amino acids. Catalyzes the dehydration of (2R,3R)-2,3-dihydroxy-3-methylpentanoate (2,3-dihydroxy-3-methylvalerate) into 2-oxo-3-methylpentanoate (2-oxo-3-methylvalerate) and of (2R)-2,3-dihydroxy-3-methylbutanoate (2,3-dihydroxyisovalerate) into 2-oxo-3-methylbutanoate (2-oxoisovalerate), the penultimate precursor to L-isoleucine and L-valine, respectively. In Brucella melitensis biotype 1 (strain ATCC 23456 / CCUG 17765 / NCTC 10094 / 16M), this protein is Dihydroxy-acid dehydratase.